The primary structure comprises 158 residues: Small ribosomal subunit protein uS9 (158 aa).

Belongs to the universal ribosomal protein uS9 family.

This Brucella melitensis biotype 1 (strain ATCC 23456 / CCUG 17765 / NCTC 10094 / 16M) protein is Small ribosomal subunit protein uS9.